Here is a 458-residue protein sequence, read N- to C-terminus: tRNA modification GTPase MnmE (458 aa).

(6S)-5-formyl-5,6,7,8-tetrahydrofolate contacts are provided by R26, E88, and R127. A TrmE-type G domain is found at 224 to 378 (GLSTAIIGRP…IEERINDIFF (155 aa)). N234 serves as a coordination point for K(+). Residues 234–239 (NVGKSS), 253–259 (TDIEGTT), and 278–281 (DTAG) each bind GTP. Residue S238 coordinates Mg(2+). K(+)-binding residues include T253, I255, and T258. Residue T259 participates in Mg(2+) binding. (6S)-5-formyl-5,6,7,8-tetrahydrofolate is bound at residue K458.

This sequence belongs to the TRAFAC class TrmE-Era-EngA-EngB-Septin-like GTPase superfamily. TrmE GTPase family. Homodimer. Heterotetramer of two MnmE and two MnmG subunits. The cofactor is K(+).

It localises to the cytoplasm. Functionally, exhibits a very high intrinsic GTPase hydrolysis rate. Involved in the addition of a carboxymethylaminomethyl (cmnm) group at the wobble position (U34) of certain tRNAs, forming tRNA-cmnm(5)s(2)U34. In Streptococcus agalactiae serotype Ia (strain ATCC 27591 / A909 / CDC SS700), this protein is tRNA modification GTPase MnmE.